The sequence spans 832 residues: MDSITVKKPRLRLVCLQCKKIKRKCDKLRPACSRCQQNSLQCEYEERTDLSANVAANDSDGFNSSHKLNFEQQPVLERTGLRYSLQVPEGVVNATLSIWNAEDMLVIVGLVTFLDYPFAAHSLAQHDQYIRALCASLYGMALVDFSNYANGIPCEDTSRSILGPLSFIEKAIFRRIEHSKQFRVQSAALGLLYNAFSMEEENFSTLLPSLIAEVEDVLMQKKDCEILLRCFYQNIYPFYPFMDISLFESDLTSLLLQDDNNRWKISTEVKNVRKKIETLSLLTIVMAMALMHSKLDANLLSMVKENASESARKLSLLCHKLLCLLDVFRYPNENTFTCLLYFYVSEHLDPESPDCVLSPTNLLTLHHLLNLSMTLGLQYEPSKYKRFKDPEVIRQRRILWLGVQSLLFQISLAEGDAGKSNSEYMEAYLTDFEEYIEASSEYEKSSASESNVQMNDIVWNKYKFHVILSKLMSDCTSVIQHPQLFHILGNIKRSEDFMAENFPTSSIYQPLHEKEPNAIKVGKSTVLDVMDIQKTEIFLTNIVGSMCFLNIFDVLSLHFEKKCVMHWEEYEKNYHFLTLKSFNAYLKLAGLISDYLENKFQGNILESRGYIIDKQICFMLVRIWMFQCRILLRFSYKQESQKKLASSSISTNDNEKEDEMIVILERLIKHIRNQMAHLVDLAKGKLQDSYFGAYQTVPMFRYVVYLIDVGGLVSVTNGFWDKISSDGEIPPKVQQAVRLKWGLDCNNSRRIKQKLISSQSLQSFNQVLLCQMEDAVLSSSFAIKANTAMSQNTAEEFFNISEEEALNQLLENNNFDAFWDLLGENLSDMPSL.

A DNA-binding region (zn(2)-C6 fungal-type) is located at residues 15 to 42; that stretch reads CLQCKKIKRKCDKLRPACSRCQQNSLQC.

The protein localises to the nucleus. Its function is as follows. Zinc cluster transcription factor involved in resistance to cycloheximide. This is Regulator of drug sensitivity 1 (RDS1) from Saccharomyces cerevisiae (strain ATCC 204508 / S288c) (Baker's yeast).